The sequence spans 346 residues: Large ribosomal subunit protein uL10 (346 aa).

The disordered stretch occupies residues 305–346; sequence EVPAAPAPEAKEEKKEEAEEEEEEKKEVSEEDLSAGLGALFG. Positions 322 to 337 are enriched in acidic residues; the sequence is AEEEEEEKKEVSEEDL.

The protein belongs to the universal ribosomal protein uL10 family. In terms of assembly, part of the 50S ribosomal subunit. Forms part of the ribosomal stalk which helps the ribosome interact with GTP-bound translation factors. Forms a heptameric L10(L12)2(L12)2(L12)2 complex, where L10 forms an elongated spine to which the L12 dimers bind in a sequential fashion.

Functionally, forms part of the ribosomal stalk, playing a central role in the interaction of the ribosome with GTP-bound translation factors. The protein is Large ribosomal subunit protein uL10 of Ignicoccus hospitalis (strain KIN4/I / DSM 18386 / JCM 14125).